Consider the following 400-residue polypeptide: E3 ubiquitin-protein ligase RNF149 (400 aa).

The first 32 residues, 1 to 32 (MAWRRREASVGARGVLALALLALALCVPGARG), serve as a signal peptide directing secretion. Residues Asn-52 and Asn-145 are each glycosylated (N-linked (GlcNAc...) asparagine). The PA domain maps to 67 to 175 (SSPKEGAHGL…PKGREILELV (109 aa)). Residues 201–221 (VVFVAIAFITMMIISLAWLIF) form a helical membrane-spanning segment. The RING-type; atypical zinc finger occupies 269–310 (CAVCIENFKVKDIIRILPCKHIFHRICIDPWLLDHRTCPMCK). The segment at 325–400 (DVQEMPAPES…SDSRHGGPIS (76 aa)) is disordered. A Phosphoserine modification is found at Ser-345. Positions 356–368 (DSSPPSASPAESE) are enriched in low complexity. The segment covering 389–400 (GRSDSRHGGPIS) has biased composition (basic and acidic residues).

The protein localises to the membrane. It carries out the reaction S-ubiquitinyl-[E2 ubiquitin-conjugating enzyme]-L-cysteine + [acceptor protein]-L-lysine = [E2 ubiquitin-conjugating enzyme]-L-cysteine + N(6)-ubiquitinyl-[acceptor protein]-L-lysine.. It functions in the pathway protein modification; protein ubiquitination. Its function is as follows. E3 ubiquitin-protein ligase. Ubiquitinates BRAF, inducing its proteasomal degradation. The protein is E3 ubiquitin-protein ligase RNF149 (RNF149) of Homo sapiens (Human).